A 440-amino-acid chain; its full sequence is O-glycoside alpha-1,2-mannosyltransferase homolog 4 (440 aa).

The Cytoplasmic portion of the chain corresponds to 1–35 (MLGWNKHVFFSESRINFRCLLRKKLKKRCPLSARF). The helical; Signal-anchor for type II membrane protein transmembrane segment at 36-56 (VLVLLLIVLIFILKMGYKQLI) threads the bilayer. Over 57–440 (YKLNHPPLRR…NLIGDGFLDE (384 aa)) the chain is Lumenal. The active-site Nucleophile is the Glu336.

Belongs to the glycosyltransferase 15 family.

It localises to the cytoplasm. Its subcellular location is the nucleus. The protein localises to the golgi apparatus membrane. Probable mannosyltransferase involved in O-glycosylation of cell wall and secreted proteins. Transfers an alpha-D-mannosyl residue from GDP-mannose into lipid-linked oligosaccharide, forming an alpha-(1-&gt;2)-D-mannosyl-D-mannose linkage. This chain is O-glycoside alpha-1,2-mannosyltransferase homolog 4 (omh4), found in Schizosaccharomyces pombe (strain 972 / ATCC 24843) (Fission yeast).